The sequence spans 84 residues: DNA-directed RNA polymerase subunit Rpo5 (84 aa).

The protein belongs to the archaeal Rpo5/eukaryotic RPB5 RNA polymerase subunit family. As to quaternary structure, part of the 13-subunit RNA polymerase complex.

It localises to the cytoplasm. It catalyses the reaction RNA(n) + a ribonucleoside 5'-triphosphate = RNA(n+1) + diphosphate. In terms of biological role, DNA-dependent RNA polymerase (RNAP) catalyzes the transcription of DNA into RNA using the four ribonucleoside triphosphates as substrates. This Saccharolobus solfataricus (strain ATCC 35092 / DSM 1617 / JCM 11322 / P2) (Sulfolobus solfataricus) protein is DNA-directed RNA polymerase subunit Rpo5.